The primary structure comprises 375 residues: AT-rich binding protein (375 aa).

The C2H2-type 1 zinc-finger motif lies at 29–52; sequence IVCHTCQEELQTQDQFWKHIQDEH. The span at 110–119 shows a compositional bias: basic and acidic residues; that stretch reads DDQREMDIHE. The tract at residues 110-142 is disordered; the sequence is DDQREMDIHEAQQQQHQQQQQHQQQQQLQQQQQ. Positions 121-142 are enriched in low complexity; the sequence is QQQQHQQQQQHQQQQQLQQQQQ. 2 consecutive C2H2-type zinc fingers follow at residues 308–332 and 338–361; these read YICDYETCGLKFKYKSRMELHRVVH and FNCELCSASFKQSCNLSTHRKKKH.

Its subcellular location is the nucleus. Functionally, may be a transcription factor for genes having (A+T) stretches in their promoter and/or enhancer regions. Binds to AT rich DNA. This chain is AT-rich binding protein, found in Drosophila pseudoobscura pseudoobscura (Fruit fly).